A 1180-amino-acid chain; its full sequence is Nonsense-mediated mRNA decay factor SMG7 (1180 aa).

TPR repeat units lie at residues 151-184 (QHCLVHLGDIARYRNQTSQAESYYRHAAQLVPSN) and 186-218 (QPYNQLAILASSKGDHLTTIFYYCRSIAVKFPF). Disordered regions lie at residues 496 to 636 (PQEK…TQTT), 692 to 795 (QTAS…SYMQ), 893 to 913 (CSDQENMPRGPPYEDNKSSPL), 1019 to 1127 (SLFE…WAAQ), and 1148 to 1180 (SSMMQPGPSALEQLLMQQKQKQQRGHGNMNPPH). The span at 504 to 520 (LQESSNGEQTPNESTHG) shows a compositional bias: polar residues. 3 stretches are compositionally biased toward basic and acidic residues: residues 547 to 559 (ENIKPREQSREQN), 584 to 606 (NEQKKEGKRKSEVKKNSHDKTTD), and 615 to 627 (TELRKTPVSEARK). Polar residues predominate over residues 692–718 (QTASHPQSANPVQTGKPSHIPYSQQRP). Residues 728–740 (PPQPQQTQPPPPQ) show a composition bias toward pro residues. The span at 741–778 (TSQQALQQSVQLQLQQQQQQQQQQQQQQQQSPTKQSSQ) shows a compositional bias: low complexity. Residues 1026 to 1038 (WSPSLPASSDHST) are compositionally biased toward polar residues. Positions 1039-1065 (PASQSPHSSNPSSLPSSPPTHSHGSMP) are enriched in low complexity. Over residues 1076-1090 (DSRDRRANDRWKAEK) the composition is skewed to basic and acidic residues. Over residues 1103-1125 (SASTSSVPETNSWHQGAPTSTWA) the composition is skewed to polar residues.

The protein resides in the cytoplasm. It localises to the nucleus. Plays a role in nonsense-mediated mRNA decay. Recruits UPF1 to cytoplasmic mRNA decay bodies. Together with SMG5 is thought to provide a link to the mRNA degradation machinery involving exonucleolytic pathways, and to serve as an adapter for UPF1 to protein phosphatase 2A (PP2A), thereby triggering UPF1 dephosphorylation. Required for normal embryonic development. This Danio rerio (Zebrafish) protein is Nonsense-mediated mRNA decay factor SMG7.